Here is a 622-residue protein sequence, read N- to C-terminus: Mitochondrial distribution and morphology protein 34 (622 aa).

One can recognise an SMP-LTD domain in the interval 1 to 204 (MSFKVNWNSL…LPTLIHQLSL (204 aa)). 2 disordered regions span residues 362-399 (YSNK…PSEL) and 568-592 (FDGG…TRNE). Basic residues predominate over residues 370–384 (KPKRRRIKVHKKNKS). The span at 390–399 (TTTTSKPSEL) shows a compositional bias: polar residues. The segment covering 571 to 583 (GKNNNTNDNNSKN) has biased composition (low complexity).

The protein belongs to the MDM34 family. As to quaternary structure, component of the ER-mitochondria encounter structure (ERMES) or MDM complex, composed of MMM1, MDM10, MDM12 and MDM34.

The protein resides in the mitochondrion outer membrane. Functionally, component of the ERMES/MDM complex, which serves as a molecular tether to connect the endoplasmic reticulum (ER) and mitochondria. Components of this complex are involved in the control of mitochondrial shape and protein biogenesis, and function in nonvesicular lipid trafficking between the ER and mitochondria. MDM34 is required for the interaction of the ER-resident membrane protein MMM1 and the outer mitochondrial membrane-resident beta-barrel protein MDM10. The sequence is that of Mitochondrial distribution and morphology protein 34 from Candida dubliniensis (strain CD36 / ATCC MYA-646 / CBS 7987 / NCPF 3949 / NRRL Y-17841) (Yeast).